The chain runs to 79 residues: Small ribosomal subunit protein bS18 (79 aa).

This sequence belongs to the bacterial ribosomal protein bS18 family. Part of the 30S ribosomal subunit. Forms a tight heterodimer with protein bS6.

Binds as a heterodimer with protein bS6 to the central domain of the 16S rRNA, where it helps stabilize the platform of the 30S subunit. The chain is Small ribosomal subunit protein bS18 from Afipia carboxidovorans (strain ATCC 49405 / DSM 1227 / KCTC 32145 / OM5) (Oligotropha carboxidovorans).